Here is a 305-residue protein sequence, read N- to C-terminus: Deoxyribonuclease gamma (305 aa).

The first 20 residues, 1-20, serve as a signal peptide directing secretion; the sequence is MSRELAPLLLLLLSIHSALA. The Bipartite nuclear localization signal signature appears at 35–51; sequence KQEDKNAMDVIVKVIKR. Residues glutamate 100 and histidine 155 contribute to the active site. Residues cysteine 194 and cysteine 231 are joined by a disulfide bond. Residues 284–305 form a not required for free DNA-nuclease activity but required for activity towards liposome-coated DNA region; that stretch reads SRAFTNSKKSVTLRKKTKSKRS. Positions 296 to 304 match the Nuclear localization signal motif; sequence LRKKTKSKR.

Belongs to the DNase I family. Ca(2+) serves as cofactor. The cofactor is Mg(2+). Poly-ADP-ribosylated by PARP1. ADP-ribosylation negatively regulates enzymatic activity during apoptosis. As to expression, liver and spleen.

It localises to the nucleus. The protein localises to the endoplasmic reticulum. The protein resides in the secreted. Inhibited by zinc. Has DNA hydrolytic activity. Is capable of both single- and double-stranded DNA cleavage, producing DNA fragments with 3'-OH ends. Can cleave chromatin to nucleosomal units and cleaves nucleosomal and liposome-coated DNA. Acts in internucleosomal DNA fragmentation (INDF) during apoptosis and necrosis. The role in apoptosis includes myogenic and neuronal differentiation, and BCR-mediated clonal deletion of self-reactive B cells. Is active on chromatin in apoptotic cell-derived membrane-coated microparticles and thus suppresses anti-DNA autoimmunity. Together with DNASE1, plays a key role in degrading neutrophil extracellular traps (NETs). NETs are mainly composed of DNA fibers and are released by neutrophils to bind pathogens during inflammation. Degradation of intravascular NETs by DNASE1 and DNASE1L3 is required to prevent formation of clots that obstruct blood vessels and cause organ damage following inflammation. This chain is Deoxyribonuclease gamma, found in Homo sapiens (Human).